The primary structure comprises 1405 residues: DNA-directed RNA polymerase subunit beta' (1405 aa).

4 residues coordinate Zn(2+): C70, C72, C85, and C88. Residues D460, D462, and D464 each coordinate Mg(2+). The Zn(2+) site is built by C814, C888, C895, and C898.

The protein belongs to the RNA polymerase beta' chain family. As to quaternary structure, the RNAP catalytic core consists of 2 alpha, 1 beta, 1 beta' and 1 omega subunit. When a sigma factor is associated with the core the holoenzyme is formed, which can initiate transcription. Requires Mg(2+) as cofactor. The cofactor is Zn(2+).

It catalyses the reaction RNA(n) + a ribonucleoside 5'-triphosphate = RNA(n+1) + diphosphate. Functionally, DNA-dependent RNA polymerase catalyzes the transcription of DNA into RNA using the four ribonucleoside triphosphates as substrates. The protein is DNA-directed RNA polymerase subunit beta' of Wigglesworthia glossinidia brevipalpis.